A 157-amino-acid chain; its full sequence is Class-10 pathogenesis-related protein 1 (157 aa).

This sequence belongs to the BetVI family. Expressed in roots. Detected in nodules and leaves, but not in stems and flowers.

This Medicago truncatula (Barrel medic) protein is Class-10 pathogenesis-related protein 1 (PR10-1).